The sequence spans 179 residues: Deoxyuridine 5'-triphosphate nucleotidohydrolase (179 aa).

Substrate-binding positions include 90 to 92 (RSG), Asn-103, 107 to 109 (TVD), and Lys-117.

Belongs to the dUTPase family. The cofactor is Mg(2+).

It carries out the reaction dUTP + H2O = dUMP + diphosphate + H(+). The protein operates within pyrimidine metabolism; dUMP biosynthesis; dUMP from dCTP (dUTP route): step 2/2. This enzyme is involved in nucleotide metabolism: it produces dUMP, the immediate precursor of thymidine nucleotides and it decreases the intracellular concentration of dUTP so that uracil cannot be incorporated into DNA. The protein is Deoxyuridine 5'-triphosphate nucleotidohydrolase of Thermobifida fusca (strain YX).